A 333-amino-acid polypeptide reads, in one-letter code: Phenylalanine--tRNA ligase alpha subunit (333 aa).

Glutamate 254 provides a ligand contact to Mg(2+).

The protein belongs to the class-II aminoacyl-tRNA synthetase family. Phe-tRNA synthetase alpha subunit type 1 subfamily. As to quaternary structure, tetramer of two alpha and two beta subunits. Mg(2+) serves as cofactor.

It is found in the cytoplasm. It catalyses the reaction tRNA(Phe) + L-phenylalanine + ATP = L-phenylalanyl-tRNA(Phe) + AMP + diphosphate + H(+). In Xylella fastidiosa (strain 9a5c), this protein is Phenylalanine--tRNA ligase alpha subunit (pheS).